Here is a 215-residue protein sequence, read N- to C-terminus: 3-demethoxyubiquinol 3-hydroxylase (215 aa).

6 residues coordinate Fe cation: E64, E94, H97, E146, E178, and H181.

The protein belongs to the COQ7 family. Fe cation serves as cofactor.

The protein resides in the cell membrane. The enzyme catalyses a 5-methoxy-2-methyl-3-(all-trans-polyprenyl)benzene-1,4-diol + AH2 + O2 = a 3-demethylubiquinol + A + H2O. It participates in cofactor biosynthesis; ubiquinone biosynthesis. In terms of biological role, catalyzes the hydroxylation of 2-nonaprenyl-3-methyl-6-methoxy-1,4-benzoquinol during ubiquinone biosynthesis. This is 3-demethoxyubiquinol 3-hydroxylase from Pseudomonas aeruginosa (strain LESB58).